Consider the following 341-residue polypeptide: HTH-type transcriptional repressor PurR (341 aa).

The 55-residue stretch at 2–56 (ATIKDVAKHAGVSTTTVSHVINKTRFVAENTKAAVWAAIKELHYSPSAVARSLKV) folds into the HTH lacI-type domain. The H-T-H motif DNA-binding region spans 4 to 23 (IKDVAKHAGVSTTTVSHVIN). The DNA-binding element occupies 48-56 (SAVARSLKV). The hypoxanthine site is built by Tyr-73, Arg-190, Thr-192, and Asp-275.

As to quaternary structure, homodimer.

It functions in the pathway purine metabolism; purine nucleotide biosynthesis [regulation]. Its function is as follows. Is the main repressor of the genes involved in the de novo synthesis of purine nucleotides, regulating purB, purC, purEK, purF, purHD, purL, purMN and guaBA expression. PurR is allosterically activated to bind its cognate DNA by binding the purine corepressors, hypoxanthine or guanine, thereby effecting transcription repression. In Yersinia pestis bv. Antiqua (strain Antiqua), this protein is HTH-type transcriptional repressor PurR.